The following is a 152-amino-acid chain: MAVKIRLKRLGKIRAPYYRVVVADSRTRRDGRVIEEIGKYHPTEDPSVIDIASERAQYWLGVGAQPTEQVLALLKVTGDWQKFKGLPGAEGTLRVKDGAAAASPDAAKEKVAAIEAEAEKHKAKASEKKAAAAASADEAGSAAADDAEGSES.

A compositionally biased stretch (basic and acidic residues) spans 118–130; that stretch reads AEKHKAKASEKKA. The interval 118–152 is disordered; the sequence is AEKHKAKASEKKAAAAASADEAGSAAADDAEGSES. Residues 131–144 show a composition bias toward low complexity; it reads AAAASADEAGSAAA.

Belongs to the bacterial ribosomal protein bS16 family.

This is Small ribosomal subunit protein bS16 from Beutenbergia cavernae (strain ATCC BAA-8 / DSM 12333 / CCUG 43141 / JCM 11478 / NBRC 16432 / NCIMB 13614 / HKI 0122).